A 334-amino-acid chain; its full sequence is Heat-inducible transcription repressor HrcA (334 aa).

Belongs to the HrcA family.

In terms of biological role, negative regulator of class I heat shock genes (grpE-dnaK-dnaJ and groELS operons). Prevents heat-shock induction of these operons. This chain is Heat-inducible transcription repressor HrcA, found in Acidovorax ebreus (strain TPSY) (Diaphorobacter sp. (strain TPSY)).